A 101-amino-acid chain; its full sequence is Small ribosomal subunit protein uS14 (101 aa).

The protein belongs to the universal ribosomal protein uS14 family. In terms of assembly, part of the 30S ribosomal subunit. Contacts proteins S3 and S10.

Functionally, binds 16S rRNA, required for the assembly of 30S particles and may also be responsible for determining the conformation of the 16S rRNA at the A site. The polypeptide is Small ribosomal subunit protein uS14 (Aeromonas salmonicida (strain A449)).